We begin with the raw amino-acid sequence, 57 residues long: Large ribosomal subunit protein bL32 (57 aa).

Residues 1–22 show a composition bias toward basic residues; that stretch reads MAVPKKKTSKAKRDQRRAHWRR. Positions 1 to 35 are disordered; that stretch reads MAVPKKKTSKAKRDQRRAHWRRQASSQAQKALSLG.

This sequence belongs to the bacterial ribosomal protein bL32 family.

This chain is Large ribosomal subunit protein bL32 (rpmF), found in Synechocystis sp. (strain ATCC 27184 / PCC 6803 / Kazusa).